The following is a 61-amino-acid chain: Conotoxin TeAr154 (61 aa).

An N-terminal signal peptide occupies residues 1–19 (MHCLPVFVILLLLTASGLS). Residues 20 to 47 (VDARPKTEDDVPLSSFRDNTKSTLQRLL) constitute a propeptide that is removed on maturation. 4-carboxyglutamate is present on glutamate 57.

Contains 2 disulfide bonds that can be either 'C1-C3, C2-C4' or 'C1-C4, C2-C3', since these disulfide connectivities have been observed for conotoxins with cysteine framework V (for examples, see AC P0DQQ7 and AC P81755). Post-translationally, contains 2 disulfide bonds. In terms of tissue distribution, expressed by the venom duct.

The protein localises to the secreted. The sequence is that of Conotoxin TeAr154 from Conus textile (Cloth-of-gold cone).